Reading from the N-terminus, the 251-residue chain is 3-deoxy-manno-octulosonate cytidylyltransferase (251 aa).

This sequence belongs to the KdsB family.

The protein localises to the cytoplasm. The enzyme catalyses 3-deoxy-alpha-D-manno-oct-2-ulosonate + CTP = CMP-3-deoxy-beta-D-manno-octulosonate + diphosphate. The protein operates within nucleotide-sugar biosynthesis; CMP-3-deoxy-D-manno-octulosonate biosynthesis; CMP-3-deoxy-D-manno-octulosonate from 3-deoxy-D-manno-octulosonate and CTP: step 1/1. It functions in the pathway bacterial outer membrane biogenesis; lipopolysaccharide biosynthesis. In terms of biological role, activates KDO (a required 8-carbon sugar) for incorporation into bacterial lipopolysaccharide in Gram-negative bacteria. This Alcanivorax borkumensis (strain ATCC 700651 / DSM 11573 / NCIMB 13689 / SK2) protein is 3-deoxy-manno-octulosonate cytidylyltransferase.